We begin with the raw amino-acid sequence, 244 residues long: 5-oxoprolinase subunit A (244 aa).

The protein belongs to the LamB/PxpA family. As to quaternary structure, forms a complex composed of PxpA, PxpB and PxpC.

It carries out the reaction 5-oxo-L-proline + ATP + 2 H2O = L-glutamate + ADP + phosphate + H(+). Functionally, catalyzes the cleavage of 5-oxoproline to form L-glutamate coupled to the hydrolysis of ATP to ADP and inorganic phosphate. The chain is 5-oxoprolinase subunit A from Salmonella agona (strain SL483).